A 355-amino-acid polypeptide reads, in one-letter code: Phosphate acyltransferase (355 aa).

Belongs to the PlsX family. As to quaternary structure, homodimer. Probably interacts with PlsY.

It is found in the cytoplasm. The catalysed reaction is a fatty acyl-[ACP] + phosphate = an acyl phosphate + holo-[ACP]. Its pathway is lipid metabolism; phospholipid metabolism. In terms of biological role, catalyzes the reversible formation of acyl-phosphate (acyl-PO(4)) from acyl-[acyl-carrier-protein] (acyl-ACP). This enzyme utilizes acyl-ACP as fatty acyl donor, but not acyl-CoA. The polypeptide is Phosphate acyltransferase (Rhodospirillum centenum (strain ATCC 51521 / SW)).